We begin with the raw amino-acid sequence, 382 residues long: MKALHFGAGNIGRGFIGKLLADAGIQLTFADVNQVVLDALNARHSYQVHVVGETEQVDTVSGVDAVSSIGDDVVDLIAQVDLVTTAVGPVVLERIAPAIAKGLVKRKEQGNESPLNIIACENMVRGTTQLKGHVMNALPEDAKAWVEEHVGFVDSAVDRIVPPSASATNDPLEVTVETFSEWIVDKTQFKGALPNIPGMELTDNLMAFVERKLFTLNTGHAITAYLGKLAGHQTIRDAILDEKIRAVVKGAMEESGAVLIKRYGFDADKHAAYIQKILGRFENPYLKDDVERVGRQPLRKLSAGDRLIKPLLGTLEYSLPHKNLIQGIAGAMHFRSEDDPQAQELAALIADKGPQAALAQISDLDANSEVVSEAVTAYKAMQ.

An NAD(+)-binding site is contributed by 3-14; it reads ALHFGAGNIGRG. Lysine 269 carries the N6-acetyllysine modification.

This sequence belongs to the mannitol dehydrogenase family. In terms of assembly, monomer.

It catalyses the reaction D-mannitol 1-phosphate + NAD(+) = beta-D-fructose 6-phosphate + NADH + H(+). This is Mannitol-1-phosphate 5-dehydrogenase from Escherichia coli O157:H7.